The sequence spans 7192 residues: MTPSRSLENGEKQMNWNESPQTASPKNVLRDSNSNGNYVNGHGTNINGDGSDGVGNGINANGSATKINGNGTYTNGNGAHTNGNGVHTNGHGISLESQTSDSKVHSTSKFKEEFRAICAKVLKIDIEELDDTCSFVSLGGDSISAIKLVTECEVRGIELKTVDVISTHTISGLFATANFRPFGKHSNGKTGISYSRNQEDDDPSPFALWTAHRDSDLIEKRQRLEEIAVLCGVETEEIEDVYPCTPLQEGLIAITTRQPTAYVQRRVCRLTNEIDLERFWAAWETLVANVASLRTRIIMGPGGQSLQVVIREKLLWRRGSNLGRYLSRDRADGMMLGQPLARFGRIQEETGSFFVWTAHHSIFDGWSALLLYRQLLAIYQQSYVPRLVPFSRFLRYLAEQDSTAATRYWHSQLHGDTMADWPALPSSNYQPQPQHVFRSSINLPHGYKPGTIMISNLLRAAWALVMAQYSGNDDVIFAVTVSGRSAPVSQIADIIAPTITTVPVRIRIDRSMSIAELLLEIQSQAAKMIEHEHTGLQTIKKLLPEFGTALELRNLLIVQPEAESDDYVYKEFPGLEAIREAMEDFDNYGLNVECILGSQSIEVLVNYDDHVINTMHLRDVMGQFTYTVQCLCNPSVSKLSVNDVATIKTSDQQRILEWNEHIPPSVDRCIHHLVQDQVNIQPAKLAVDAWDGKYTYADLARESISLAHHLVGLGLGPEQPVGLCGSVLPLGVSHPFARTSGIVQEAKVRIVLVDESQRTELAKLATTLIVVDSELIAALPSEAKPPETGVTPENVAWILFTSGSTGTPKGVVLQHASLCTSLIGHANTVGINKYTRTFQFAAFTFDVSLCDIFSTLQAGGCVCMPSEDERMNSLAEAASRMEVNYAELTSTVTETISPSQVPSLATLALSGEALKPSVLSTWARHSSVFNSYGPTECSIVASNSKRLSNVEEAQNIGGPMSSIFWVVQAANFHQLCPIGAPGELLIEGPLLARGYLNDEVKTEKAFIIDPDFTKQLGLSPGRRMYRTGDLVRQNQDGSLMYLGRCDSTQVKVRGQRVEVSEIEYQISRQLPEIQTVAVEMLQRGTQASLVAVVNFAMDSKYAAPAAFDTTTTKTETIFSTDALRAVFQDLQLALSQVLPAYMIPTLYAPMSTIPMNASGKLDRRVLRTKLDSMSFDELRVYMADDGPKAAPSTDAEKQVQSLWSEVLAINPQDIALSDNFFRIGGDSIAAMRMVALKASRRLRLTVADVFQHPQLSDLAFVIQRRLQMVEDGVQEEDSAPFDLWAKFKVDGLDSTKRAQELAIIATRCDIRVDDIEDIYPCTPLQEGLIAITTHQPTAYVSRQIYKLAPTLDVVRFQKAWQTLAQVTPILRTRILAGLDTSDVSLQVVVRGSITWQYGADSGTLSDYVAQDRKSGMRLGQPLVRFGLVRNSSEQFFIWTAHHSVYDGWSVSLMYQHLYDIYFDQRIPSTIPYARFIRYLIRHDDAASEKYWRSQLQGEVVSNWPPLPRADYQPRPQQRYTCDIILPDHTMNDRVNSLLPSVLRAAWGVTMSKYTGQGDVVFGVTLLGRNAPVSQITEMTGPTITTVPVRIHLDGPQPLTINQFLQNVQKQAADMINYEHAGLQVIKKLVPELNSSLELRNLLVIQPASETDGTAFPGLDPLPVDLEGFDSYGLTIECSILSGLVKVEARYDENVIATPQLKRTIRTFEHVVKQLLDVRNSVYRLEEMSWLSDYDEEAIANWSKATPIRVERCIHELVQEQTKLRPNATAICAWDGNLTYAELDMQATWLARYLTSLGACSQRMVGICMDKSKWAGVSMLAVLKAGAVLVPLGVNHPEARIKAMVDDTDTQIILVDEKQRDRLSIQGVRLITVDADILKKLPVLAEKEELLGSVNPDDAAWVIYTSGSTGKPKGVVLQHVALCSSIQAHGARFGMGTSTRMLQFAAHTFDACIQDYFTTLSWGGVVCVPSENDRMSDLTTAMCQMKVTFATLTSTVARLIDPHKVPSMQKLALVGEPVKADVVKQWLGHTIVLNAYGPSECSIHSSCGEPLADSTKSAVIGTGMGTRLWVVDVDYNQLCPIGAPGELLIEGPLLAREYLNDPRKTKAAFVSDPRFAQKFGLAPGTRMYRTGDLVKQNEDSSITHLGRRDTQIKIRGQRVEVGEIEFQIAQHPQVRTVAVELLEQDSNGSQVILTAVIEFTEDSEYRNGPVTSSGLLTLTPSLSLAFEMLRGALFQVLPSYMLPSMYVPIVDMPMNVNGKLDRRAVRDLLQAMTPDVRQQYLSASDHKVAPSTREECLVHSLWTEALSLSFSQVGIYDNFFQIGGDSVVAMRMVATESARELQLTVADLFQHPRLIELAELLAKRSVDKKVEADPEPFSLWLEPQIGSEQQQEKLTMVAKQCGISVNHVEDVYPCTPLQVGLMAITARQPLAYIDRQVYKLADTIDLDRFQAAWRALSDATPILRTRIITSEGPQSFLQVVVGGCDPWRDSNDLEDYMASDRDVGIALGKPLVRMGLVRERNSEERYFVWTAHHSVYDGTSALLMYQQLASIYFHGSLLPTAPFTRFIRYLARKEVIAAESAAYWADQLQGEVMANWPPLPRIDYQPKPQHEMTQIFRLPQFESRSVVTISNVIRAAWALVMAQRTGHSDVVFAVTVSGRNAPISQVDSIIAPTISTVPVRVQIDWTQDVAGFLFAIQNQAAQMIDYEHTGLRAIKALVPELGPTLDIRNVLVVQTAEERGAADHFPGIEALPQGKENFDSYGLLTECTLGTDGEVRIDFRYDDNVIPSSSIKRISAQFAHLVQQLCGNATSTLHRLNELVLIAPEDQEQIMKWNPMLPPRVDSCIHELFYKQVMARPQAEAVSGWDGELSYSDLADESIRLAYQLISLGIGPEMKVGLCIDKSKWAIIAIMSILFAGGVVVPLGVTHPLPRLDVVIEDASIDLILVDQHQRKRLAALSQNVKLITVNDALLRTLPVHTEPPVTGVVSRNAAWIIYTSGSTGTPKGVVLEHGGCCTSMRTQGKKMNLSAETRALQFTPFTFDVSISDVSATLIYGGCICVISESDRVNNLPGAIREMKVNFASLTPTVAQMLSPAELPSLKTLALTGEAVKPEVVELWMNSVALYDTYGPSEGSVCTCNGPLSSPDQADNIGFPMSTLHWVTQLHNHNQLCPIGAPGELLIEGPLLARGYLNQARTKESFVNDPAFTKQQTGLPSARHIYRTGDLVRQNEDGSFIYLGRRDDQIKIRGQRVEVGEIEYQIVCELPGTHSAAVAMLQDGKNISLIAIVDFKSDSEHYPGELESLGTLAPTPQLRAAFNELRQSLTKLLPSYMVPAIFVPVVQMPTNISGKLDRLGVRALLRAIPSDHLARYMIDETLPSETPSTKMEKVIQSLWAEALDIPMDNISAHDNFFQIGGDSVTAMRIVAATTRTNQLQLTVSDIFQNPKLSDLASVMTEHRKNHFDVMDEDPEPFSLWEAVISDNSNEQKRQIEAIAQQCNVSVDDIEDIYPCTALQEGLLAVTARQTSAYVSRQAYVLSDQIDISRFKEAWRKLVAGIHILRTRAVVGPDSLLQVVVRDEITWRHGSNLEDYIQQDKEEGIRLGQPLSRYGLVQLPSGEQVFVWTAHHSIYDGWTIRLMCRQLISLYRQEEDISTSIPYSRFIQYLTQINIEDSIEYWREQLRGESVTANWPSLPQPNYEPRPRHLLRKHISLPRTENQGIVMSNILRAAWGLVMIQYSGENDVVYAANLSGRNVPVRDVAEICAPTITTVPIRLRLDHTSTQTVGDFLQNIQQQAIEMINHEHTGLQVIKSLAPELSDSVLKLRNLLVIQPAAESDTHLDFPGIELVPSDIADFDAYGVNIECTLGQEIAVEARYDENVVETPYMNGVLDQFVYIVGLLCDPSISRWNATVPERVTKCIHELVQEQALARPTALAVQAWDGKLTYGELDNLANRLAHQLVSFGIGSLPDQMVGVCMEKSLFAVVAMLAVLKAGGVVVPLGVTHPITRLDTIIHDTGITVLLVDASQDERLAELSPTRILVNSDHLYHYLPARTQPPKTPVNHMDAAWVIYTSGTTGTPKGAVSEHGTLSTSIKAHGARYGFGHHTRKLNYAAHTFDGTIEDFFTTLSWGGVCCIPSEEDRMDKYKLMEFMNLTKVNSAAMTYTVASLLSPRDLPTLHTLVLGGEPATIDVVSTWMTEVNLFNCYGPSECSIFSAAAGPTKNTNELHNIGFPIGTRLWVADIENYHKLAPIGAPGELLIEGPQLARGYLNDESKTSAAFIVDPAFTTHFKLPLGTRMYRSGDIVRQKNDGSLVYVARRDMQVKIRGQRVEIGEIESQISQHISEARTIAVELLKLGTQSQPVLVAAVEFADGSQYHTGDVTSFGMLAPTEAIREAFIKLRGTLFQVLPGYMVPSAYLTIAEMPRNISGKLDRKTLRTMLEAIPADAIQQYLDGEAKTLPSTQVELQLQALWAEALGISVDGVGAHDNFFQLGGDSVAAMRIVAMSQAREMGLSVADIFAYPRLSELAVILDGRKNSNEVFYSDPEPFALWPRATNKVLDENTLLADIASKCNVTVNQIEDIYPCTPLQEGMIAITARQSAAYVSRQIYALDTTVIELGKFQRAWQVLANATPILRTRLVITQNGQSMQVVLRDTIAWRHSTDLDAYVNEDRAEGISLGQPLLRYSLVKQITGECFFVWTAHHSIYDGWTMRSICQRLVEMYNNIDNSSYQMPQSVPYSRFIHYLTQSDKSAAATFWRQQLHGDIMADWPSLPSIDYQPKPQHRDRKTIRVAGSTSKNILTSNILRAAWALLMSQYTGHPDVVFAASVSGRNAPVWQIGEIAGPTLTTVPVRVQAKPGMTVRQFIQEVQEQSTAMIRFEHTGLQNIKALVPEAAMALELRNVLVVQIAEESDHRIDFPGLEALPMPFEDFDSFGIHLECTPGLDDIEVEARYDVNIVSAPHMKRVLNQFEYVVQKFHDSEYSDFSLQSIQLNPHDERQILEWNATVPSHTERCVHNLVDDHVAARPMAPAICGWDGDLTYRELSRIATSLAFHLQHELGVGPEQKVGVCMDKSKWAVVAMLAVMYAGGVVVPLGVAHPLTRIRGILIDSASSVVLVDATQRERLVDLHTSLICVDAKLIARLSSQNQKQNQTQKLQVEVTPGNLAWVVYTSGSTGKPKGVMLEHRALSTALQAHGSAFGMDTNTRTIQFAAHTFDAAIQDIFTTFSKGGCVCIPSEHDRVNNLTKAMASMNVNFANFTSTVASMLVPEELPSLKTMILAGEAVTPTAVGLWSQHVTIFNSYGPSECSINSSCSKPVKEVSQASNVGLPLSCCFWVTNTTDYNSLCPIGAPGELLIEGPIQARGYLNDKEQTNKSFVTDPGFTKKLGLSGRRMYRTGDLVRQNADGTLTYLGRQDLQVKIRGQRVEIGEIEYQIKKKLLGARTVAVEKIEQGGHSEQTRLVTMMDFKDTSEHSHNPDILASGALSPTPKLQTAFEKLRQSLSEVLPSYMVPTFYVPVAQMPVNASNKLDRRAVKAVLASLTPDALQQYLPGGTDTKQAPDTDLGRLIQGLWADALGISTDTISMTDNIFHLGGDSVTAMRIVAAAYSHELQLTVTDIFQHPQLADLVNTLSNRSLERNTEIQEDPMAFELWEEAASCSTEERKRLLTEVAAQCGVAVSHIEDVYPSTPLQEGLMAITARQPAAYVSRQVYTLAKTVDQLKFKMAWQALSSEAHILRTRLLVAPHGLQVVVNDRIDWHHGTDLENYLQADRRAGMSPGKPLVRYGLIKQPSGETFFVWTSHHSLYDGWTLRSLGKRLLDLYNDGSPQSFVPFSRFIRYLQFGRPGNDDTATYWRNELEGDIVTDWPSLPRSDYQPLPRDNFSRAITLPDSHHSGSVVMSNVIRAAWALVMSQYAGHNDVAFAATVSGRNAPVWQIEDIPAPTITTVPLRISVDPMQTVAEFLDTVQQQAVRMIDYEHTGLQGIKALAPDLGPAIDLRNLLVVQPAADSDSNVQLDFPGLGSVSMPIEPFNSYGLTVECKLASHEIVVDVHYDKDVISSAQLKRVIDFFACVVQRILTQSPRSYRIQEIVAIGEEDLQQVLAWNSTIPPNVDKCIHEMVQAQVKKSPAALAISAWDGDLTYEEFFKSSARLAHHLVALGVNTGSNIGICMDKSKWGPVSMLSIMQAGAAIMPLGTSHPLARIETIVRNSEASVIIVDEKQRQRLDQLYTETSLTLVTVDSKFFKQLPAQTKAPSTGVRPSDASWLIHTSGSTGVPKGVIIDHVTMSTSLRAQGSWLGLNQKSRFLQFSNYTFDNVITDTFATTVFGGCVCVPSEDARMNNLPGFMATANVNVAMLTSTVARQISPSQVPSLHTLILTGEPVRADVVSTWLGHADIYNAYGPTEGSMSTCTKPMMRSDQVSNIGYPLATRAWITQPDHIQLSPIGAPGELFIEGPLLARGYLNNPEMTRDSFIINPEFTKRLGLENRRVYRTGDLVRQNEDGSLIYLGRRDLQVKIRGQRVEVGEIELQIIKHTPGAELVAVELIQQKDTKEEKRNLIAAIEFAKDSEHCHGSQNTPGPQILAPTDALRDDFARLRGLLYQVLPSYMIPSAFIPTTNLDRNLSGKLDRKGLRGLLEALSSQQLRQYSASGGSKVNPSTTMERQLQTLWAEALGIPADQVGAHDNFFQIGGDSMVAMRVVAASHSKDLNLRVNDIFQHSCLSDLAVVLTDRLAHNFNGGQDGHAPFSLIKTDDIDDFLQQIASSVVGCAIQDIVDILPTTDFQSSIIDTALAAPKSGTSHFLLDGNGPCDTRALKKSCLELIQATDTLRTGYVFDQGNLLQVIQAYFEPEIKIYETDSTIEAVTEDIVSRDMYQPIGLGRPFTQIAIIRETATLKHRVLLRLTHAEYDAHSMGSIWQNLRSLYEGGSTRPQAKFSDFLYNQRQSINADTYDYWRDLLKGSSMPAINLSAKKIGQYPSKVNQDLFRTIETPDLMVEGRTSAMLVKSAWSLVLSQFLRVNDVVFADTVSTRTTVDSSLMDAMGCCVTLIPFRVTLEQQWTIKDLLDNVRDQQSQSMQHSQLGFREILRECTDWPASTRFTSALNHISSGPESSIFSMRGVEYSISEMEIKDPLWEIDVGITTIQRGSELEIRLSYLPANISESVATSLLDALHNTLQFIHNNPLSPVKQVLSFHTDMKIQNGSSN.

Residues 1–48 show a composition bias toward polar residues; the sequence is MTPSRSLENGEKQMNWNESPQTASPKNVLRDSNSNGNYVNGHGTNING. Residues 1–52 are disordered; the sequence is MTPSRSLENGEKQMNWNESPQTASPKNVLRDSNSNGNYVNGHGTNINGDGSD. In terms of domain architecture, Carrier 1 spans 105–181; it reads HSTSKFKEEF…GLFATANFRP (77 aa). Residue Ser-142 is modified to O-(pantetheine 4'-phosphoryl)serine. The segment at 239-634 is condensation 1; it reads EDVYPCTPLQ…TYTVQCLCNP (396 aa). Positions 675–1047 are adenylation 1; sequence QDQVNIQPAK…SLMYLGRCDS (373 aa). A Carrier 2 domain is found at 1190–1266; that stretch reads APSTDAEKQV…DLAFVIQRRL (77 aa). O-(pantetheine 4'-phosphoryl)serine is present on Ser-1227. Residues 1316–1736 are condensation 2; it reads EDIYPCTPLQ…MSWLSDYDEE (421 aa). Residues 1758–2154 form an adenylation 2 region; it reads QEQTKLRPNA…GRRDTQIKIR (397 aa). The Carrier 3 domain maps to 2288-2364; that stretch reads APSTREECLV…ELAELLAKRS (77 aa). Ser-2325 is modified (O-(pantetheine 4'-phosphoryl)serine). Residues 2407–2829 are condensation 3; it reads VEDVYPCTPL…LIAPEDQEQI (423 aa). The segment at 2849–3245 is adenylation 3; that stretch reads YKQVMARPQA…GRRDDQIKIR (397 aa). Residues 3378 to 3455 form the Carrier 4 domain; the sequence is TPSTKMEKVI…DLASVMTEHR (78 aa). Residue Ser-3415 is modified to O-(pantetheine 4'-phosphoryl)serine. Residues 3502 to 3891 form a condensation 4 region; it reads EDIYPCTALQ…NGVLDQFVYI (390 aa). Residues 3920–4320 form an adenylation 4 region; that stretch reads QEQALARPTA…ARRDMQVKIR (401 aa). Residues 4453–4529 enclose the Carrier 5 domain; that stretch reads LPSTQVELQL…ELAVILDGRK (77 aa). Ser-4490 is subject to O-(pantetheine 4'-phosphoryl)serine. A condensation 5 region spans residues 4574-4971; the sequence is EDIYPCTPLQ…QFEYVVQKFH (398 aa). The segment at 5013 to 5414 is adenylation 5; it reads DDHVAARPMA…GRQDLQVKIR (402 aa). Positions 5551-5627 constitute a Carrier 6 domain; the sequence is APDTDLGRLI…DLVNTLSNRS (77 aa). At Ser-5588 the chain carries O-(pantetheine 4'-phosphoryl)serine. A condensation 6 region spans residues 5674-6071; the sequence is EDVYPSTPLQ…CVVQRILTQS (398 aa). An adenylation 6 region spans residues 6111-6507; sequence QAQVKKSPAA…GRRDLQVKIR (397 aa). Positions 6645–6721 constitute a Carrier 7 domain; it reads NPSTTMERQL…DLAVVLTDRL (77 aa). Ser-6682 is subject to O-(pantetheine 4'-phosphoryl)serine. A condensation 7 region spans residues 6795–7178; sequence NGPCDTRALK…NPLSPVKQVL (384 aa).

This sequence belongs to the NRP synthetase family.

The protein operates within mycotoxin biosynthesis. Nonribosomal peptide synthetase; part of the gene cluster that mediates the biosynthesis of pneumocandins, lipohexapeptides of the echinocandin family that prevent fungal cell wall formation by non-competitive inhibition of beta-1,3-glucan synthase. The 10,12-dimethylmyristoyl side chain is synthesized by the reducing polyketide synthase gloL/GLPKS4. The thioesterase gloN/GLHYD exclusively interacts with gloL/GLPKS4 to maintain turnover of the polyketide side chain. The 10R,12S-dimethylmyristic acid is then transferred to the first thiolation domain of the nonribosomal peptide synthetase gloA/GLNRPS4 by the acyl-AMP ligase gloD/GLligase, followed by its acylation to L-ornithine to trigger elongation of the cyclic hexapeptide. L-ornithine, 4R-hydroxyl-L-proline (generated from L-proline by the dioxygenase gloF/GLOXY2), 3S-hydroxyl-L-homotyrosine (generated by gloG/GLHtyB, gloH/GLHtyA, gloI/GLHtyC, gloJ/GLHtyD and hydroxylated at C-3 by the dioxygenase gloM/GLOXY1), 3R-hydroxyl-L-glutamine (generated from L-glutamine probably by the dioxygenase gloE/GLOXY3) and 3S-hydroxyl-L-proline (generated from L-proline by the dioxygenase gloF/GLOXY2 to yield pneumocandin B0), or 3S-hydroxyl-4S-methyl-L-proline (generated from L-leucine by the dioxygenase gloC/GLOXY4 to yield pneumocandin A0) are sequentially added to the growing chain. The last C domain of gloA/GLNRPS4 is proposed to be responsible for cyclization by condensation to form the peptide bond between L-ornithine and 3S-hydroxyl-4S-methyl-L-proline (for pneumocandin A0) or 3S-hydroxyl-L-proline (for pneumocandin B0). Finally, the subsequent C-4 hydroxylation of 3S-hydroxyl-L-homotyrosine and L-ornithine dihydroxylation at C-4 and C-5 are performed by the cytochrome P450 monooxygenases gloP/GLP450-1 and gloO/GLP450-2, respectively. This Glarea lozoyensis (strain ATCC 20868 / MF5171) protein is Nonribosomal peptide synthetase gloA.